A 519-amino-acid chain; its full sequence is Cytochrome P450 88A1 (519 aa).

The chain crosses the membrane as a helical span at residues 1-21 (MLGVGMAAAVLLGAVALLLAD). Cys466 is a binding site for heme.

It belongs to the cytochrome P450 family. It depends on heme as a cofactor. Expressed in roots, developing leaves, the vegetative meristem, and suspension culture cells.

It localises to the membrane. It participates in plant hormone biosynthesis; gibberellin biosynthesis. The protein is Cytochrome P450 88A1 (CYP88A1) of Zea mays (Maize).